Reading from the N-terminus, the 234-residue chain is R-spondin-4 (234 aa).

An N-terminal signal peptide occupies residues 1–19 (MRAPLCLLLLVAHAVDMLA). Residue N34 is glycosylated (N-linked (GlcNAc...) asparagine). Disulfide bonds link C35–C41, C38–C47, C50–C69, C73–C88, C91–C98, C95–C104, C107–C118, C122–C135, C139–C181, C150–C157, and C190–C196. The FU repeat unit spans residues 85–128 (VNRCKKCGATCESCFSQDFCIRCKRQFYLYKGKCLPTCPPGTLA). A TSP type-1 domain is found at 138–197 (ECELGPWGGWSPCTHNGKTCGSAWGLESRVREAGRAGHEEAATCQVLSESRKCPIQRPCP). Positions 190–234 (CPIQRPCPGERSPGQKKGRKDRRPRKDRKLDRRLDVRPRQPGLQP) are disordered. Basic residues predominate over residues 203 to 216 (GQKKGRKDRRPRKD). Basic and acidic residues predominate over residues 217-227 (RKLDRRLDVRP).

Belongs to the R-spondin family. Binds heparin. Interacts with LGR4, LGR5 and LGR6. Tyr-112 may be phosphorylated; however as this position is probably extracellular, the vivo relevance is not proven.

It is found in the secreted. Activator of the canonical Wnt signaling pathway by acting as a ligand for LGR4-6 receptors. Upon binding to LGR4-6 (LGR4, LGR5 or LGR6), LGR4-6 associate with phosphorylated LRP6 and frizzled receptors that are activated by extracellular Wnt receptors, triggering the canonical Wnt signaling pathway to increase expression of target genes. Also regulates the canonical Wnt/beta-catenin-dependent pathway and non-canonical Wnt signaling by acting as an inhibitor of ZNRF3, an important regulator of the Wnt signaling pathway. This Homo sapiens (Human) protein is R-spondin-4 (RSPO4).